A 218-amino-acid chain; its full sequence is Small ribosomal subunit protein uS3 (218 aa).

The region spanning 38-106 (IREYINKRLQ…RVHINIVEIK (69 aa)) is the KH type-2 domain.

It belongs to the universal ribosomal protein uS3 family. As to quaternary structure, part of the 30S ribosomal subunit. Forms a tight complex with proteins S10 and S14.

Its function is as follows. Binds the lower part of the 30S subunit head. Binds mRNA in the 70S ribosome, positioning it for translation. The sequence is that of Small ribosomal subunit protein uS3 from Geobacillus sp. (strain WCH70).